The primary structure comprises 208 residues: Pyrophosphate-energized proton pump 2 (208 aa).

Helical transmembrane passes span 19-39 (AYPLAICAACVITSIIGTFFV), 54-74 (GLIVTGALSILGLGAATSFTI), 89-109 (GGNLFVCGLIGLVVTALIVVI), 140-160 (LAVSLESTALPAIVIVGGIIA), and 167-187 (LFGTAIAVTAMLGLAGMIVAL).

Belongs to the H(+)-translocating pyrophosphatase (TC 3.A.10) family. Homodimer. Mg(2+) is required as a cofactor.

The protein localises to the cell inner membrane. It catalyses the reaction diphosphate + H2O + H(+)(in) = 2 phosphate + 2 H(+)(out). In terms of biological role, proton pump that utilizes the energy of pyrophosphate hydrolysis as the driving force for proton movement across the membrane. Generates a proton motive force. The protein is Pyrophosphate-energized proton pump 2 (hppA2) of Mycoplana dimorpha.